Consider the following 345-residue polypeptide: MSVIVPIHGPAIAPAPAPERVGVLLVNLGTPDSCDTKGVRIYLREFLSDPRVIENQGLFWKLALNGIILNTRPARKAKDYQKIWNHEKNESPLKTITRAQAEKLSASLGDRGHLIVDWAMRYGNPSLRDRIEALVAKGCSRLLVVPLYPQYSAATSATVCDQAFRVLRELRAQPTLRVTPPYYRDSAYIDALATSIKSHLASLTFEPELIVASFHGMPQAYIDKGDPYQAQCVATVEALRERMGVADDKLLLTFQSRFGFDQWLQPYTDKTIEALARKGVRKLAVVMPGFSADCLETLEEIAQENAEIFMEHGGEEFTAIPCLNDSDAGVQVIRQLVLRELQGWL.

The Fe cation site is built by histidine 215 and glutamate 296.

It belongs to the ferrochelatase family.

The protein localises to the cytoplasm. It carries out the reaction heme b + 2 H(+) = protoporphyrin IX + Fe(2+). The protein operates within porphyrin-containing compound metabolism; protoheme biosynthesis; protoheme from protoporphyrin-IX: step 1/1. Functionally, catalyzes the ferrous insertion into protoporphyrin IX. The protein is Ferrochelatase of Rhodopseudomonas palustris (strain TIE-1).